The following is a 101-amino-acid chain: Small ribosomal subunit protein uS14 (101 aa).

This sequence belongs to the universal ribosomal protein uS14 family. In terms of assembly, part of the 30S ribosomal subunit. Contacts proteins S3 and S10.

Functionally, binds 16S rRNA, required for the assembly of 30S particles and may also be responsible for determining the conformation of the 16S rRNA at the A site. This is Small ribosomal subunit protein uS14 from Caulobacter vibrioides (strain ATCC 19089 / CIP 103742 / CB 15) (Caulobacter crescentus).